The chain runs to 441 residues: FAM10 family protein At4g22670 (441 aa).

Positions 41-114 are disordered; it reads KIPTGVHEED…PQKMGDSSVE (74 aa). The span at 46–55 shows a compositional bias: basic and acidic residues; the sequence is VHEEDKDTKP. Composition is skewed to acidic residues over residues 61–71 and 78–102; these read EESDDDMDETE and EEEEEEDEIVESDVELEGDTVEPDN. Phosphoserine is present on residues Ser-63 and Ser-89. 3 TPR repeats span residues 121–156, 158–190, and 191–224; these read EAAQEAKGKAMEALSEGNFDEAIEHLTRAITLNPTS, IMYGNRASVYIKLKKPNAAIRDANAALEINPDS, and AKGYKSRGMARAMLGEWAEAAKDLHLASTIDYDE. Residues 236–285 are a coiled coil; the sequence is NAHKLEEHRRKYDRLRKEREDKKAERDRLRRRAEAQAAYDKAKKEEQSSS. The span at 244-282 shows a compositional bias: basic and acidic residues; the sequence is RRKYDRLRKEREDKKAERDRLRRRAEAQAAYDKAKKEEQ. Residues 244–314 are disordered; sequence RRKYDRLRKE…MPGGFPGGMG (71 aa). Positions 289 to 314 are enriched in gly residues; the sequence is SGGGFPGGMPGGFPGGMPGGFPGGMG. The region spanning 391 to 430 is the STI1 domain; that stretch reads DPELMTAFSDPEVMAALQDVMKNPANLAKHQANPKVAPVI.

It belongs to the FAM10 family.

This is FAM10 family protein At4g22670 from Arabidopsis thaliana (Mouse-ear cress).